The primary structure comprises 978 residues: Sensor histidine kinase TodS (978 aa).

The PAS 1 domain occupies 32–103 (CEEHARIIFD…TQKRLVETAS (72 aa)). Positions 108-162 (VRCDVEILGKSGGREVIAVDFSLLPICNEEGSIVYLLAEGRNITDKKKAEAMLAL) constitute a PAC 1 domain. The Histidine kinase 1 domain occupies 187–405 (KVSHELRTPL…LFQVKLPLNA (219 aa)). Position 190 is a phosphohistidine; by autocatalysis (His190). In terms of domain architecture, Response regulatory spans 452-567 (RVLIVEDNPD…ELRARVSNLV (116 aa)). Asp500 bears the 4-aspartylphosphate mark. The PAS 2 domain maps to 611 to 681 (SEARWKAVYE…QRLANLLQGG (71 aa)). The region spanning 685–737 (YSVERSYLCKNGSTIWANASVSLMPQRVGESPVILQIIDDITEKKQAQENLNQ) is the PAC 2 domain. The 218-residue stretch at 757 to 974 (YIAHEINQPL…CFLVSIPARQ (218 aa)) folds into the Histidine kinase 2 domain. His760 carries the phosphohistidine modification.

In terms of processing, autophosphorylated. Activation requires a sequential transfer of a phosphate group from a His in the primary transmitter domain, to an Asp in the receiver domain and to a His in the secondary transmitter domain.

The protein resides in the cytoplasm. The catalysed reaction is ATP + protein L-histidine = ADP + protein N-phospho-L-histidine.. With respect to regulation, activity is regulated by agonists and antagonists. Binding of agonists such as toluene or benzene to TodS stimulates autophosphorylation at His-190. Activity is inhibited by antagonists such as o-xylene, o-chlorotoluene and trimethylbenzene isomers, which bind to TodS but do not stimulate autophosphorylation. Agonists and antagonists bind to the same PAS domain. Functionally, member of the two-component regulatory system TodS/TodT involved in the regulation of toluene degradation. Phosphorylates TodT via a four-step phosphorelay in response to toluene. Can also be induced by benzene and ethylbenzene. This Pseudomonas putida (strain DOT-T1E) protein is Sensor histidine kinase TodS (todS).